We begin with the raw amino-acid sequence, 113 residues long: Iron-sulfur cluster insertion protein ErpA (113 aa).

Iron-sulfur cluster-binding residues include cysteine 41, cysteine 105, and cysteine 107.

Belongs to the HesB/IscA family. In terms of assembly, homodimer. Requires iron-sulfur cluster as cofactor.

Required for insertion of 4Fe-4S clusters for at least IspG. The sequence is that of Iron-sulfur cluster insertion protein ErpA from Glaesserella parasuis serovar 5 (strain SH0165) (Haemophilus parasuis).